We begin with the raw amino-acid sequence, 764 residues long: 5-methyltetrahydropteroyltriglutamate--homocysteine methyltransferase (764 aa).

Residues 16-19 (RELK) and Lys121 each bind 5-methyltetrahydropteroyltri-L-glutamate. L-homocysteine-binding positions include 440 to 442 (IGS) and Glu493. L-methionine is bound by residues 440-442 (IGS) and Glu493. 5-methyltetrahydropteroyltri-L-glutamate is bound by residues 524–525 (RC) and Trp570. L-homocysteine is bound at residue Asp608. Asp608 is a binding site for L-methionine. Glu614 contributes to the 5-methyltetrahydropteroyltri-L-glutamate binding site. His650, Cys652, and Glu674 together coordinate Zn(2+). The active-site Proton donor is the His703. A Zn(2+)-binding site is contributed by Cys735.

It belongs to the vitamin-B12 independent methionine synthase family. The cofactor is Zn(2+).

The enzyme catalyses 5-methyltetrahydropteroyltri-L-glutamate + L-homocysteine = tetrahydropteroyltri-L-glutamate + L-methionine. It functions in the pathway amino-acid biosynthesis; L-methionine biosynthesis via de novo pathway; L-methionine from L-homocysteine (MetE route): step 1/1. Functionally, catalyzes the transfer of a methyl group from 5-methyltetrahydrofolate to homocysteine resulting in methionine formation. This chain is 5-methyltetrahydropteroyltriglutamate--homocysteine methyltransferase, found in Burkholderia ambifaria (strain MC40-6).